The sequence spans 331 residues: Glycerophosphodiester phosphodiesterase 1 (331 aa).

At 1–2 (MW) the chain is on the cytoplasmic side. A helical transmembrane segment spans residues 3–23 (LWEEQGGLMGPFSFLLLVLLL). The Lumenal portion of the chain corresponds to 24–254 (LTRSPFNACL…WKQSMFVALD (231 aa)). The region spanning 65 to 331 (VSAIAHRGGS…SMLEDCTPEF (267 aa)) is the GP-PDE domain. The Mg(2+) site is built by Glu-97 and Asp-99. N-linked (GlcNAc...) asparagine glycosylation is present at Asn-168. Asp-174 provides a ligand contact to Mg(2+). Asn-198 carries N-linked (GlcNAc...) asparagine glycosylation. A helical transmembrane segment spans residues 255-275 (ILLDWSMHNILWYLCGVSAFL). Over 276–331 (AQKDFISPDYVKKWSAKGIQVVAWTVNTFDEKSYYESHLGSSYITDSMLEDCTPEF) the chain is Cytoplasmic.

The protein belongs to the glycerophosphoryl diester phosphodiesterase family. Interacts with PRAF2. Interacts with RGS16. Mg(2+) is required as a cofactor. Post-translationally, N-glycosylated.

Its subcellular location is the cell membrane. The protein resides in the cytoplasmic vesicle membrane. The enzyme catalyses sn-glycero-3-phospho-1D-myo-inositol + H2O = myo-inositol + sn-glycerol 3-phosphate + H(+). It carries out the reaction 1-O-(1Z-octadecenyl)-sn-glycero-3-phospho-(N-5Z,8Z,11Z,14Z-eicosatetraenoyl)-ethanolamine + H2O = 1-O-(1Z-octadecenyl)-sn-glycero-3-phosphate + N-(5Z,8Z,11Z,14Z-eicosatetraenoyl)-ethanolamine + H(+). It catalyses the reaction 1-O-(1Z-octadecenyl)-sn-glycero-3-phospho-(N-9Z-octadecenoyl)-ethanolamine + H2O = 1-O-(1Z-octadecenyl)-sn-glycero-3-phosphate + N-(9Z-octadecenoyl) ethanolamine + H(+). The catalysed reaction is 1-O-(1Z-octadecenyl)-sn-glycero-3-phospho-N-hexadecanoyl-ethanolamine + H2O = 1-O-(1Z-octadecenyl)-sn-glycero-3-phosphate + N-hexadecanoylethanolamine + H(+). The enzyme catalyses N-(4Z,7Z,10Z,13Z,16Z,19Z)-docosahexaenoyl-sn-glycero-3-phosphoethanolamine + H2O = N-(4Z,7Z,10Z,13Z,16Z,19Z)-docosahexaenoyl ethanolamine + sn-glycerol 3-phosphate + H(+). It carries out the reaction N-eicosanoyl-sn-glycero-3-phosphoethanolamine + H2O = N-eicosanoyl ethanolamine + sn-glycerol 3-phosphate + H(+). It catalyses the reaction N-hexadecanoyl-sn-glycero-3-phosphoethanolamine + H2O = N-hexadecanoylethanolamine + sn-glycerol 3-phosphate + H(+). The catalysed reaction is N-(9Z-octadecenoyl)-sn-glycero-3-phosphoethanolamine + H2O = N-(9Z-octadecenoyl) ethanolamine + sn-glycerol 3-phosphate + H(+). The enzyme catalyses N-(5Z,8Z,11Z,14Z-eicosatetraenoyl)-sn-glycero-3-phosphoethanolamine + H2O = N-(5Z,8Z,11Z,14Z-eicosatetraenoyl)-ethanolamine + sn-glycerol 3-phosphate + H(+). Inhibited by EDTA, calcium chloride, and zinc chloride. Enhanced by magnesium chloride. Glycerophosphodiester phosphodiesterase activity can be modulated by G-protein signaling pathways. In terms of biological role, hydrolyzes the phosphodiester bond of glycerophosphodiesters such as glycerophosphoinositol (GroPIns) and glycerophosphoethanolamine (GroPEth), to yield a glycerol phosphate and an alcohol. Hydrolyzes glycerophospho-N-acylethanolamines to N-acylethanolamines in the brain and participates in bioactive N-acylethanolamine biosynthesis such as anandamide (an endocannabinoid), N-palmitoylethanolamine (an anti-inflammatory), and N-oleoylethanolamine (an anorexic). In addition, has a lysophospholipase D activity by hydrolyzing N-acyl-lysoplasmenylethanolamine (N-acyl-lysoPlsEt) to N-acylethanolamine. However lysophospholipase D activity is lower than glycerophosphodiester phosphodiesterase activity. Has little or no activity towards glycerophosphocholine. This chain is Glycerophosphodiester phosphodiesterase 1, found in Bos taurus (Bovine).